The primary structure comprises 117 residues: Histone H1-like protein HC1 (117 aa).

The interval 57 to 117 (EKSGLMTRKP…KSSKSRYLRK (61 aa)) is disordered. Basic residues predominate over residues 66-81 (PATKAKKAAATKKAAP). Positions 82 to 94 (KPKIQAKAAPKAK) are enriched in low complexity. The segment covering 95-117 (ATTKKTPAKAKAKKSSKSRYLRK) has biased composition (basic residues).

It belongs to the histone H1/H5 family. HCT subfamily.

Might have a role analogous to that of eukaryotic histone proteins. The polypeptide is Histone H1-like protein HC1 (hctA) (Chlamydia psittaci (Chlamydophila psittaci)).